We begin with the raw amino-acid sequence, 372 residues long: Chaperone protein DnaJ (372 aa).

The 65-residue stretch at Asp5 to Gly69 folds into the J domain. Residues Gly129–Thr211 form a CR-type zinc finger. Zn(2+) is bound by residues Cys142, Cys145, Cys159, Cys162, Cys185, Cys188, Cys199, and Cys202. 4 CXXCXGXG motif repeats span residues Cys142 to Gly149, Cys159 to Gly166, Cys185 to Gly192, and Cys199 to Gly206.

The protein belongs to the DnaJ family. Homodimer. Zn(2+) serves as cofactor.

It is found in the cytoplasm. Its function is as follows. Participates actively in the response to hyperosmotic and heat shock by preventing the aggregation of stress-denatured proteins and by disaggregating proteins, also in an autonomous, DnaK-independent fashion. Unfolded proteins bind initially to DnaJ; upon interaction with the DnaJ-bound protein, DnaK hydrolyzes its bound ATP, resulting in the formation of a stable complex. GrpE releases ADP from DnaK; ATP binding to DnaK triggers the release of the substrate protein, thus completing the reaction cycle. Several rounds of ATP-dependent interactions between DnaJ, DnaK and GrpE are required for fully efficient folding. Also involved, together with DnaK and GrpE, in the DNA replication of plasmids through activation of initiation proteins. This Macrococcus caseolyticus (strain JCSC5402) (Macrococcoides caseolyticum) protein is Chaperone protein DnaJ.